The following is a 358-amino-acid chain: Adenosine deaminase (358 aa).

Zn(2+) contacts are provided by His-14 and His-16. His-16, Asp-18, and Gly-183 together coordinate substrate. Residue His-212 coordinates Zn(2+). Glu-215 functions as the Proton donor in the catalytic mechanism. Residue Asp-294 participates in Zn(2+) binding. A substrate-binding site is contributed by Asp-295.

The protein belongs to the metallo-dependent hydrolases superfamily. Adenosine and AMP deaminases family. Requires Zn(2+) as cofactor.

Its subcellular location is the cell membrane. The protein resides in the cell junction. The protein localises to the cytoplasmic vesicle lumen. It localises to the cytoplasm. It is found in the lysosome. The enzyme catalyses adenosine + H2O + H(+) = inosine + NH4(+). The catalysed reaction is 2'-deoxyadenosine + H2O + H(+) = 2'-deoxyinosine + NH4(+). Catalyzes the hydrolytic deamination of adenosine and 2-deoxyadenosine. Plays an important role in purine metabolism and in adenosine homeostasis. Modulates signaling by extracellular adenosine, and so contributes indirectly to cellular signaling events. May act as a positive regulator of T-cell coactivation. In Xenopus laevis (African clawed frog), this protein is Adenosine deaminase (ada).